The primary structure comprises 358 residues: UDP-N-acetylglucosamine--N-acetylmuramyl-(pentapeptide) pyrophosphoryl-undecaprenol N-acetylglucosamine transferase (358 aa).

UDP-N-acetyl-alpha-D-glucosamine contacts are provided by residues 13 to 15, R166, S196, and Q291; that span reads TAG.

It belongs to the glycosyltransferase 28 family. MurG subfamily.

Its subcellular location is the cell membrane. The catalysed reaction is di-trans,octa-cis-undecaprenyl diphospho-N-acetyl-alpha-D-muramoyl-L-alanyl-D-glutamyl-meso-2,6-diaminopimeloyl-D-alanyl-D-alanine + UDP-N-acetyl-alpha-D-glucosamine = di-trans,octa-cis-undecaprenyl diphospho-[N-acetyl-alpha-D-glucosaminyl-(1-&gt;4)]-N-acetyl-alpha-D-muramoyl-L-alanyl-D-glutamyl-meso-2,6-diaminopimeloyl-D-alanyl-D-alanine + UDP + H(+). It functions in the pathway cell wall biogenesis; peptidoglycan biosynthesis. Its function is as follows. Cell wall formation. Catalyzes the transfer of a GlcNAc subunit on undecaprenyl-pyrophosphoryl-MurNAc-pentapeptide (lipid intermediate I) to form undecaprenyl-pyrophosphoryl-MurNAc-(pentapeptide)GlcNAc (lipid intermediate II). This is UDP-N-acetylglucosamine--N-acetylmuramyl-(pentapeptide) pyrophosphoryl-undecaprenol N-acetylglucosamine transferase from Clostridium botulinum (strain Alaska E43 / Type E3).